Consider the following 88-residue polypeptide: Elongation factor 1-beta (88 aa).

It belongs to the EF-1-beta/EF-1-delta family.

Its function is as follows. Promotes the exchange of GDP for GTP in EF-1-alpha/GDP, thus allowing the regeneration of EF-1-alpha/GTP that could then be used to form the ternary complex EF-1-alpha/GTP/AAtRNA. The protein is Elongation factor 1-beta of Halobacterium salinarum (strain ATCC 29341 / DSM 671 / R1).